A 326-amino-acid polypeptide reads, in one-letter code: RNA/RNP complex-1-interacting phosphatase (326 aa).

The segment at 1–28 (MNQWHYGRYSRGRDFTARAPPKKKGKNQ) is disordered. In terms of domain architecture, Tyrosine-protein phosphatase spans 59–206 (FEAKLMPEEC…LQKRRVRKNQ (148 aa)). Cys150 functions as the Phosphocysteine intermediate in the catalytic mechanism. 151–156 (THGLNR) serves as a coordination point for substrate. Arg156 acts as the Proton donor/acceptor in catalysis. A disordered region spans residues 200–258 (RRVRKNQNASASRSGGLEDSAHLTEQVHTTNKPVNKGPKKSRRGGHLESSQHVQTQSSA). Polar residues predominate over residues 247–258 (ESSQHVQTQSSA).

The protein belongs to the protein-tyrosine phosphatase family. Non-receptor class dual specificity subfamily. As to quaternary structure, monomer. May interact with SFRS7 and SFRS9/SRP30C.

It is found in the nucleus. The protein localises to the nucleus speckle. In terms of biological role, possesses RNA 5'-triphosphatase and diphosphatase activities, but displays a poor protein-tyrosine phosphatase activity. In addition, has phosphatase activity with ATP, ADP and O-methylfluorescein phosphate (in vitro). Binds to RNA. May participate in nuclear mRNA metabolism. This chain is RNA/RNP complex-1-interacting phosphatase (Dusp11), found in Rattus norvegicus (Rat).